The chain runs to 187 residues: Ribosome-recycling factor (187 aa).

The protein belongs to the RRF family.

It localises to the cytoplasm. Responsible for the release of ribosomes from messenger RNA at the termination of protein biosynthesis. May increase the efficiency of translation by recycling ribosomes from one round of translation to another. The protein is Ribosome-recycling factor of Bradyrhizobium sp. (strain BTAi1 / ATCC BAA-1182).